A 715-amino-acid chain; its full sequence is Fatty acid oxidation complex subunit alpha (715 aa).

The interval 1–190 (MIYEGKAITV…KVGAVDAVVA (190 aa)) is enoyl-CoA hydratase/isomerase. D297 contributes to the substrate binding site. Residues 312–715 (KDVKQAAVLG…MAKNGQSFFG (404 aa)) form a 3-hydroxyacyl-CoA dehydrogenase region. NAD(+) is bound by residues M325, D344, 401–403 (VVE), K408, and S430. H451 acts as the For 3-hydroxyacyl-CoA dehydrogenase activity in catalysis. N454 is an NAD(+) binding site. N501 and Y660 together coordinate substrate.

It in the N-terminal section; belongs to the enoyl-CoA hydratase/isomerase family. The protein in the C-terminal section; belongs to the 3-hydroxyacyl-CoA dehydrogenase family. In terms of assembly, heterotetramer of two alpha chains (FadB) and two beta chains (FadA).

The enzyme catalyses a (3S)-3-hydroxyacyl-CoA + NAD(+) = a 3-oxoacyl-CoA + NADH + H(+). It catalyses the reaction a (3S)-3-hydroxyacyl-CoA = a (2E)-enoyl-CoA + H2O. It carries out the reaction a 4-saturated-(3S)-3-hydroxyacyl-CoA = a (3E)-enoyl-CoA + H2O. The catalysed reaction is (3S)-3-hydroxybutanoyl-CoA = (3R)-3-hydroxybutanoyl-CoA. The enzyme catalyses a (3Z)-enoyl-CoA = a 4-saturated (2E)-enoyl-CoA. It catalyses the reaction a (3E)-enoyl-CoA = a 4-saturated (2E)-enoyl-CoA. It participates in lipid metabolism; fatty acid beta-oxidation. Involved in the aerobic and anaerobic degradation of long-chain fatty acids via beta-oxidation cycle. Catalyzes the formation of 3-oxoacyl-CoA from enoyl-CoA via L-3-hydroxyacyl-CoA. It can also use D-3-hydroxyacyl-CoA and cis-3-enoyl-CoA as substrate. The chain is Fatty acid oxidation complex subunit alpha from Pseudomonas fluorescens (strain ATCC BAA-477 / NRRL B-23932 / Pf-5).